A 678-amino-acid polypeptide reads, in one-letter code: Exoribonuclease 2 (678 aa).

Positions 193–521 (REDLTALPFV…INHRLLKAHI (329 aa)) constitute an RNB domain. An S1 motif domain is found at 568–650 (ETRFQAEIFD…ENRSLVGKPT (83 aa)). The tract at residues 658 to 678 (SETQTSTEQPAEGAENNEPQA) is disordered.

It belongs to the RNR ribonuclease family. RNase II subfamily.

It is found in the cytoplasm. The enzyme catalyses Exonucleolytic cleavage in the 3'- to 5'-direction to yield nucleoside 5'-phosphates.. Involved in mRNA degradation. Hydrolyzes single-stranded polyribonucleotides processively in the 3' to 5' direction. The sequence is that of Exoribonuclease 2 from Vibrio cholerae serotype O1 (strain ATCC 39541 / Classical Ogawa 395 / O395).